A 458-amino-acid polypeptide reads, in one-letter code: Dihydrolipoyllysine-residue acetyltransferase component of pyruvate dehydrogenase complex, mitochondrial (458 aa).

Residues 1-28 constitute a mitochondrion transit peptide; that stretch reads MIVPVLSRQALRHASVARVALPSLTRWY. One can recognise a Lipoyl-binding domain in the interval 34 to 110; the sequence is HTVVKMPALS…AVGNPIAILV (77 aa). Lys75 carries the N6-lipoyllysine modification. Positions 126–164 are disordered; it reads DAGGETSPAVPKDEPKNESTASAPTPAPTPAPEPENTSF. In terms of domain architecture, Peripheral subunit-binding (PSBD) spans 177 to 214; that stretch reads NALPAAKRLAREKGIDLRNVKGSGPGGKITEEDVKKAL. Catalysis depends on residues His431 and Asp435.

Belongs to the 2-oxoacid dehydrogenase family. It depends on (R)-lipoate as a cofactor.

It is found in the mitochondrion matrix. It carries out the reaction N(6)-[(R)-dihydrolipoyl]-L-lysyl-[protein] + acetyl-CoA = N(6)-[(R)-S(8)-acetyldihydrolipoyl]-L-lysyl-[protein] + CoA. Functionally, the pyruvate dehydrogenase complex catalyzes the overall conversion of pyruvate to acetyl-CoA and CO(2). It contains multiple copies of three enzymatic components: pyruvate dehydrogenase (E1), dihydrolipoamide acetyltransferase (E2) and lipoamide dehydrogenase (E3). This chain is Dihydrolipoyllysine-residue acetyltransferase component of pyruvate dehydrogenase complex, mitochondrial (mrp-3), found in Neurospora crassa (strain ATCC 24698 / 74-OR23-1A / CBS 708.71 / DSM 1257 / FGSC 987).